A 396-amino-acid chain; its full sequence is Ribosomal RNA large subunit methyltransferase I (396 aa).

Residues 2–79 (AIRIKLKPGR…REEEIDRAFF (78 aa)) enclose the PUA domain.

Belongs to the methyltransferase superfamily. RlmI family.

It localises to the cytoplasm. The catalysed reaction is cytidine(1962) in 23S rRNA + S-adenosyl-L-methionine = 5-methylcytidine(1962) in 23S rRNA + S-adenosyl-L-homocysteine + H(+). In terms of biological role, specifically methylates the cytosine at position 1962 (m5C1962) of 23S rRNA. This is Ribosomal RNA large subunit methyltransferase I from Shewanella putrefaciens (strain CN-32 / ATCC BAA-453).